Reading from the N-terminus, the 256-residue chain is Triosephosphate isomerase (256 aa).

12–14 (NWK) is a substrate binding site. Residue histidine 99 is the Electrophile of the active site. Residue glutamate 169 is the Proton acceptor of the active site. Substrate contacts are provided by residues glycine 175, serine 214, and 235-236 (GG).

It belongs to the triosephosphate isomerase family. Homodimer.

The protein localises to the cytoplasm. It carries out the reaction D-glyceraldehyde 3-phosphate = dihydroxyacetone phosphate. Its pathway is carbohydrate biosynthesis; gluconeogenesis. It participates in carbohydrate degradation; glycolysis; D-glyceraldehyde 3-phosphate from glycerone phosphate: step 1/1. Its function is as follows. Involved in the gluconeogenesis. Catalyzes stereospecifically the conversion of dihydroxyacetone phosphate (DHAP) to D-glyceraldehyde-3-phosphate (G3P). This is Triosephosphate isomerase from Rhizobium meliloti (strain 1021) (Ensifer meliloti).